The primary structure comprises 461 residues: Cysteine--tRNA ligase (461 aa).

Cysteine 29 serves as a coordination point for Zn(2+). The 'HIGH' region signature appears at 31-41 (MTVYDFCHIGH). Positions 210, 235, and 239 each coordinate Zn(2+). A 'KMSKS' region motif is present at residues 267-271 (KMSKS). Lysine 270 contributes to the ATP binding site.

The protein belongs to the class-I aminoacyl-tRNA synthetase family. As to quaternary structure, monomer. The cofactor is Zn(2+).

The protein resides in the cytoplasm. It catalyses the reaction tRNA(Cys) + L-cysteine + ATP = L-cysteinyl-tRNA(Cys) + AMP + diphosphate. The polypeptide is Cysteine--tRNA ligase (Ectopseudomonas mendocina (strain ymp) (Pseudomonas mendocina)).